We begin with the raw amino-acid sequence, 252 residues long: Protein Flattop homolog (252 aa).

The segment at 177 to 252 (TEKRRRKRTI…EKERKAAKGH (76 aa)) is disordered. Over residues 218-252 (PKDKPKDKPKDKEAGKKDKTKDKGKEKERKAAKGH) the composition is skewed to basic and acidic residues.

The protein belongs to the Flattop family.

The sequence is that of Protein Flattop homolog from Drosophila melanogaster (Fruit fly).